The chain runs to 656 residues: ATP-dependent zinc metalloprotease FtsH (656 aa).

Topologically, residues methionine 1–serine 10 are cytoplasmic. A helical membrane pass occupies residues phenylalanine 11 to glycine 31. Residues alanine 32–glycine 116 lie on the Extracellular side of the membrane. Residues leucine 117–phenylalanine 137 traverse the membrane as a helical segment. Over methionine 138–alanine 656 the chain is Cytoplasmic. Glycine 209 to threonine 216 contacts ATP. Histidine 432 contributes to the Zn(2+) binding site. The active site involves glutamate 433. Zn(2+) contacts are provided by histidine 436 and aspartate 511. Residues phenylalanine 622–glycine 632 show a composition bias toward polar residues. The disordered stretch occupies residues phenylalanine 622–alanine 656.

The protein in the central section; belongs to the AAA ATPase family. In the C-terminal section; belongs to the peptidase M41 family. Homohexamer. The cofactor is Zn(2+).

It is found in the cell membrane. In terms of biological role, acts as a processive, ATP-dependent zinc metallopeptidase for both cytoplasmic and membrane proteins. Plays a role in the quality control of integral membrane proteins. The sequence is that of ATP-dependent zinc metalloprotease FtsH from Chloroflexus aggregans (strain MD-66 / DSM 9485).